We begin with the raw amino-acid sequence, 359 residues long: uncharacterized protein (359 aa).

46–53 (GPKSSGKS) contributes to the ATP binding site.

It belongs to the archaeal ATPase family.

This is an uncharacterized protein from Methanocaldococcus jannaschii (strain ATCC 43067 / DSM 2661 / JAL-1 / JCM 10045 / NBRC 100440) (Methanococcus jannaschii).